The following is a 748-amino-acid chain: Subtilisin-like protease (748 aa).

A signal peptide spans 1-24 (MMKMELRLLVSLIFILCSISMLAA). In terms of domain architecture, Inhibitor I9 spans 37 to 115 (TYIVHVKKSE…ARPERTLELH (79 aa)). The 479-residue stretch at 122-600 (FLGLKQGQGL…AGHVNPVKAN (479 aa)) folds into the Peptidase S8 domain. Residues Asp-147 and His-206 each act as charge relay system in the active site. The PA domain occupies 365-454 (PLVYPGSFGY…VEVSYAAGLT (90 aa)). Asn-376, Asn-380, and Asn-405 each carry an N-linked (GlcNAc...) asparagine glycan. Residue Ser-533 is the Charge relay system of the active site. N-linked (GlcNAc...) asparagine glycans are attached at residues Asn-675 and Asn-722.

The protein belongs to the peptidase S8 family.

It is found in the secreted. The protein resides in the extracellular space. It localises to the apoplast. In terms of biological role, required for arbuscular mycorrhiza (AM) development during AM symbiosis with AM fungi (e.g. Glomeromycota intraradices). This chain is Subtilisin-like protease, found in Medicago truncatula (Barrel medic).